The sequence spans 378 residues: SWI/SNF-related matrix-associated actin-dependent regulator of chromatin subfamily B member 1 (378 aa).

Positions 1–106 are DNA-binding; the sequence is MIMALSKTFG…DEKYKAVSIS (106 aa).

It belongs to the SNF5 family. As to quaternary structure, component of the multiprotein chromatin-remodeling complexes SWI/SNF. Component of neural progenitors-specific chromatin remodeling complex (npBAF complex) and the neuron-specific chromatin remodeling complex (nBAF complex). Component of the BAF (SWI/SNF) chromatin remodeling complex. Component of the SWI/SNF-B (PBAF) chromatin remodeling complex. Binds to double-stranded DNA.

It is found in the nucleus. In terms of biological role, involved in chromatin-remodeling. Core component of the BAF (SWI/SNF) complex. This ATP-dependent chromatin-remodeling complex plays important roles in cell proliferation and differentiation, in cellular antiviral activities and inhibition of tumor formation. Belongs to the neural progenitors-specific chromatin remodeling complex (npBAF complex) and the neuron-specific chromatin remodeling complex (nBAF complex) and may play a role in neural development. The sequence is that of SWI/SNF-related matrix-associated actin-dependent regulator of chromatin subfamily B member 1 (smarcb1) from Xenopus tropicalis (Western clawed frog).